The sequence spans 213 residues: Methylthioribulose-1-phosphate dehydratase (213 aa).

Residues His104 and His106 each coordinate Zn(2+).

It belongs to the aldolase class II family. MtnB subfamily. It depends on Zn(2+) as a cofactor.

It catalyses the reaction 5-(methylsulfanyl)-D-ribulose 1-phosphate = 5-methylsulfanyl-2,3-dioxopentyl phosphate + H2O. It functions in the pathway amino-acid biosynthesis; L-methionine biosynthesis via salvage pathway; L-methionine from S-methyl-5-thio-alpha-D-ribose 1-phosphate: step 2/6. Its function is as follows. Catalyzes the dehydration of methylthioribulose-1-phosphate (MTRu-1-P) into 2,3-diketo-5-methylthiopentyl-1-phosphate (DK-MTP-1-P). This is Methylthioribulose-1-phosphate dehydratase from Stenotrophomonas maltophilia (strain R551-3).